Reading from the N-terminus, the 364-residue chain is MADPAVGAPAGMLIELTHRCPLHCPYCSNPLELVRREAELTCEQWTDILTQARELGVVQMHFSGGEPLARPDLPDLVGHARRLGAYVNLVTSGVGLTAERAHDLARRGVDHVQLSLQDADPAAGQAIAGARVHTAKLEAARAVTAAGLPLTVNIVLHRGNIDRTGRMVDLAVDLGADRIELANTQYYGWGLRNRAALMPTAAQLAAAREAVRHARTRYAGGPELVYVAADYYDDRPKPCMDGWGSTQLTVTPAGDVLPCPAAYAITTLPVENALRRPLSEIWYASRSFNAYRGTGWMREPCRTCPERHADHGGCRCQAFQLTGDAAATDPACGLSPHRSLVDAALAEVTDGPVPAFVPRGPVPA.

Positions 6–222 (VGAPAGMLIE…HARTRYAGGP (217 aa)) constitute a Radical SAM core domain. Positions 20, 24, and 27 each coordinate [4Fe-4S] cluster.

This sequence belongs to the radical SAM superfamily. PqqE family. In terms of assembly, interacts with PqqD. The interaction is necessary for activity of PqqE. It depends on [4Fe-4S] cluster as a cofactor.

It catalyses the reaction [PQQ precursor protein] + S-adenosyl-L-methionine = E-Y cross-linked-[PQQ precursor protein] + 5'-deoxyadenosine + L-methionine + H(+). It functions in the pathway cofactor biosynthesis; pyrroloquinoline quinone biosynthesis. Functionally, catalyzes the cross-linking of a glutamate residue and a tyrosine residue in the PqqA protein as part of the biosynthesis of pyrroloquinoline quinone (PQQ). This is PqqA peptide cyclase from Streptomyces rochei (Streptomyces parvullus).